The primary structure comprises 309 residues: Probable lipid kinase YegS-like (309 aa).

Positions 1-134 (MTTPRWRLIL…IDLLRVDADG (134 aa)) constitute a DAGKc domain. ATP is bound by residues Thr-39, 65–71 (GDGTLSA), and Thr-96. Residues Leu-219, Asp-222, and Leu-224 each contribute to the Mg(2+) site. The active-site Proton acceptor is Glu-280.

The protein belongs to the diacylglycerol/lipid kinase family. YegS lipid kinase subfamily. Mg(2+) is required as a cofactor. Ca(2+) serves as cofactor.

Its subcellular location is the cytoplasm. Functionally, probably phosphorylates lipids; the in vivo substrate is unknown. This Stenotrophomonas maltophilia (strain K279a) protein is Probable lipid kinase YegS-like.